Consider the following 198-residue polypeptide: T-cell surface glycoprotein CD3 epsilon chain (198 aa).

Positions 1–21 (MQSGTRWRVLGLCLLSIGVWG) are cleaved as a signal peptide. At 22 to 117 (QDGNEEMGSI…RVCENCMEMD (96 aa)) the chain is on the extracellular side. In terms of domain architecture, Ig-like spans 37–107 (QVSISGTTVI…DASHHLYLKA (71 aa)). The cysteines at positions 49 and 89 are disulfide-linked. A helical membrane pass occupies residues 118-138 (VMAVATIVIVDICITLGLLLL). Residues 139 to 198 (VYYWSKNRKAKAKPVTRGAGAGGRQRGQNKERPPPVPNPDYEPIRKGQQDLYSGLNQRRI) lie on the Cytoplasmic side of the membrane. Residues 152–198 (PVTRGAGAGGRQRGQNKERPPPVPNPDYEPIRKGQQDLYSGLNQRRI) are disordered. The NUMB-binding region stretch occupies residues 166–183 (QNKERPPPVPNPDYEPIR). One can recognise an ITAM domain in the interval 169–196 (ERPPPVPNPDYEPIRKGQQDLYSGLNQR). The segment at 170–177 (RPPPVPNP) is proline-rich sequence. A phosphotyrosine mark is found at Y179 and Y190. The segment covering 188-198 (DLYSGLNQRRI) has biased composition (polar residues).

As to quaternary structure, the TCR-CD3 complex is composed of a CD3D/CD3E and a CD3G/CD3E heterodimers that preferentially associate with TCRalpha and TCRbeta, respectively, to form TCRalpha/CD3E/CD3G and TCRbeta/CD3G/CD3E trimers. In turn, the hexamer interacts with CD3Z homodimer to form the TCR-CD3 complex. Alternatively, TCRalpha and TCRbeta can be replaced by TCRgamma and TCRdelta. Interacts with CD6. Interacts (via Proline-rich sequence) with NCK1; the interaction is ligand dependent but independent of tyrosine kinase activation. Post-translationally, phosphorylated on Tyr residues after T-cell receptor triggering by LCK in association with CD4/CD8.

The protein localises to the cell membrane. Functionally, part of the TCR-CD3 complex present on T-lymphocyte cell surface that plays an essential role in adaptive immune response. When antigen presenting cells (APCs) activate T-cell receptor (TCR), TCR-mediated signals are transmitted across the cell membrane by the CD3 chains CD3D, CD3E, CD3G and CD3Z. All CD3 chains contain immunoreceptor tyrosine-based activation motifs (ITAMs) in their cytoplasmic domain. Upon TCR engagement, these motifs become phosphorylated by Src family protein tyrosine kinases LCK and FYN, resulting in the activation of downstream signaling pathways. In addition of this role of signal transduction in T-cell activation, CD3E plays an essential role in correct T-cell development. Also participates in internalization and cell surface down-regulation of TCR-CD3 complexes via endocytosis sequences present in CD3E cytosolic region. In addition to its role as a TCR coreceptor, it serves as a receptor for ITPRIPL1. Ligand recognition inhibits T-cell activation by promoting interaction with NCK1, which prevents CD3E-ZAP70 interaction and blocks the ERK-NFkB signaling cascade and calcium influx. The sequence is that of T-cell surface glycoprotein CD3 epsilon chain (CD3E) from Macaca fascicularis (Crab-eating macaque).